The chain runs to 131 residues: MSEIPAELYYTDEHEWVLRTGDDTLRVGITDYAQAALGDVVFVQLPDVGAELTSGESFGEVESTKSVSDLYAPVSAKVLAVNGNLEASPDLVNSDPYGEGWLVDLQLDADDMEAALGGLLDADGYRGVVTE.

A Lipoyl-binding domain is found at 24–106; it reads TLRVGITDYA…YGEGWLVDLQ (83 aa). At lysine 65 the chain carries N6-lipoyllysine.

Belongs to the GcvH family. The glycine cleavage system is composed of four proteins: P, T, L and H. It depends on (R)-lipoate as a cofactor.

The glycine cleavage system catalyzes the degradation of glycine. The H protein shuttles the methylamine group of glycine from the P protein to the T protein. The protein is Glycine cleavage system H protein of Mycobacterium sp. (strain JLS).